A 456-amino-acid polypeptide reads, in one-letter code: Probable mannan endo-1,4-beta-mannosidase F (456 aa).

The signal sequence occupies residues 1–18 (MRPLSSAALLSAIGAVAA). In terms of domain architecture, CBM1 spans 19 to 54 (QVGPWGQCGGQSYTGGTSCVSGWACVFLNDWYSQCQ). Residues 79-110 (STSVSATAPPSSTSSSTASVSSSTSSTPIPTS) form a disordered region. The ser-rich linker stretch occupies residues 79–113 (STSVSATAPPSSTSSSTASVSSSTSSTPIPTSSGS). The catalytic stretch occupies residues 114–456 (FVKAEGLKFN…CAVIDHVSRI (343 aa)). Positions 166 and 280 each coordinate substrate. The active-site Proton donor is glutamate 281. Tyrosine 356 contributes to the substrate binding site. The active-site Nucleophile is glutamate 390. Tryptophan 420 serves as a coordination point for substrate.

Belongs to the glycosyl hydrolase 5 (cellulase A) family.

It is found in the secreted. It catalyses the reaction Random hydrolysis of (1-&gt;4)-beta-D-mannosidic linkages in mannans, galactomannans and glucomannans.. Functionally, endo-1,4-mannanase, a crucial enzyme for depolymerization of seed galactomannans and wood galactoglucomannans. This chain is Probable mannan endo-1,4-beta-mannosidase F (manF), found in Neosartorya fischeri (strain ATCC 1020 / DSM 3700 / CBS 544.65 / FGSC A1164 / JCM 1740 / NRRL 181 / WB 181) (Aspergillus fischerianus).